A 427-amino-acid chain; its full sequence is Probable transcription factor At5g28040 (427 aa).

The disordered stretch occupies residues 1–81 (MASDQRDTDF…APATKSSSGT (81 aa)). At S14 the chain carries Phosphoserine. A compositionally biased stretch (gly residues) spans 22–32 (GGGGGGRGGGE). Positions 33-62 (TESDEDVVIPEPNEAEDDDHDPDPDPEYED) are enriched in acidic residues.

Belongs to the GeBP family.

This chain is Probable transcription factor At5g28040, found in Arabidopsis thaliana (Mouse-ear cress).